The primary structure comprises 364 residues: MSATPLVSQVDSHNPEKSKLIPPLLGASVAELSAWVQQQGQPAYRGKQLHEWIYDKGVRSLADISVFSKQWRAEVAEIPIGRSTLHYRSVAPDGTVKYLLRLTDGQIIETVGIPTFAERGEGPKARLTVCVSTQVGCPMACDFCATGKGGYKRNLARHEIIDQVLTVQEDFQQRVSNVVFMGLGEPLLNTENVLAALKSLNQDIGIGQRSLTVSTVGIRDRIRQFAQNNLQITLAVSLHAPNQALREKLIPSARAYPLEELLAECREYVEITGRRVTFEYVLLAGVNDLPEHALELSKCMRGFQSHVNLIPYNPIQEVDYKRPNRDRIEAFVNVLKQQNTAVSVRYSRGLEADAACGQLRASKN.

The active-site Proton acceptor is the Glu-109. A Radical SAM core domain is found at 123–351 (PKARLTVCVS…VSVRYSRGLE (229 aa)). Cysteines 130 and 356 form a disulfide. Residues Cys-137, Cys-141, and Cys-144 each coordinate [4Fe-4S] cluster. Residues 184 to 185 (GE), Ser-214, 237 to 239 (SLH), and Asn-313 contribute to the S-adenosyl-L-methionine site. The S-methylcysteine intermediate role is filled by Cys-356.

This sequence belongs to the radical SAM superfamily. RlmN family. [4Fe-4S] cluster serves as cofactor.

Its subcellular location is the cytoplasm. The enzyme catalyses adenosine(2503) in 23S rRNA + 2 reduced [2Fe-2S]-[ferredoxin] + 2 S-adenosyl-L-methionine = 2-methyladenosine(2503) in 23S rRNA + 5'-deoxyadenosine + L-methionine + 2 oxidized [2Fe-2S]-[ferredoxin] + S-adenosyl-L-homocysteine. The catalysed reaction is adenosine(37) in tRNA + 2 reduced [2Fe-2S]-[ferredoxin] + 2 S-adenosyl-L-methionine = 2-methyladenosine(37) in tRNA + 5'-deoxyadenosine + L-methionine + 2 oxidized [2Fe-2S]-[ferredoxin] + S-adenosyl-L-homocysteine. Its function is as follows. Specifically methylates position 2 of adenine 2503 in 23S rRNA and position 2 of adenine 37 in tRNAs. This chain is Probable dual-specificity RNA methyltransferase RlmN, found in Nostoc punctiforme (strain ATCC 29133 / PCC 73102).